The primary structure comprises 146 residues: Globin (146 aa).

N-acetylalanine is present on A1. Residues 1–146 (ALSAAEAEVV…IIDAMKKAGK (146 aa)) form the Globin domain. A heme b-binding site is contributed by H95.

It belongs to the globin family. As to quaternary structure, monomer.

In Dolabella auricularia (Shoulderblade sea cat), this protein is Globin.